The chain runs to 164 residues: Transcription antitermination protein NusB (164 aa).

Residues 144–164 (KNGRGLIDHTPPRAAKTDAKS) form a disordered region. Residues 149–164 (LIDHTPPRAAKTDAKS) show a composition bias toward basic and acidic residues.

This sequence belongs to the NusB family.

Functionally, involved in transcription antitermination. Required for transcription of ribosomal RNA (rRNA) genes. Binds specifically to the boxA antiterminator sequence of the ribosomal RNA (rrn) operons. This chain is Transcription antitermination protein NusB, found in Chlorobium phaeovibrioides (strain DSM 265 / 1930) (Prosthecochloris vibrioformis (strain DSM 265)).